The primary structure comprises 465 residues: MATSKLPAVSGEEETTILMAKEELEALRTAFESGDIPQAASRLRELLASSDCTRLEVGVTGESGAGKSSLINALRGLGAEDPDAALTGVVETTIEPSPYPHPQFPDVTLWDLPGAGSPGCSADKYLKQVDFGRYDFFLLVSPRRCGAVETRLASEILRQGKKFYFVRTKVDEDLAATRMQRPSGFSEGAVLHEIREHCVERLRGAGVHDPRVFLVSNLSPARYDFPLLMSTWERDLPAHRRHAGLLSLPDISLEALQEKKDMLQEQVLKTALVSGVIQALPVPGLAAAYDDALLIRSLRGYHRSFGLDDDSLAKLAEQVGKQAGDLRSVIRSPLANEVSPETVLRLYSQSSDGAMRVARAFEKGIPVFGTLVAGGISFGTVYTMLQGCLNEMAEDAQRVRIKALEEEEDTQPDVSLEAAGDNGVEKRGSGEGSMEEAPLSTRRKLGLLLKYILDSWKKRDLAEDK.

Positions threonine 53–aspartate 235 constitute an IRG-type G domain. Residues glutamate 62 to serine 69, threonine 87 to glutamate 91, lysine 169 to aspartate 171, and serine 216 to leucine 218 contribute to the GTP site. 2 positions are modified to phosphoserine: serine 247 and serine 304. Residues glutamate 405–proline 438 are disordered.

It belongs to the TRAFAC class dynamin-like GTPase superfamily. IRG family.

The protein localises to the cell projection. Its subcellular location is the cilium. The protein resides in the flagellum. It localises to the lipid droplet. The catalysed reaction is GTP + H2O = GDP + phosphate + H(+). Its function is as follows. Required for sperm motility and therefore male fertility, via positive regulation of spermatozoa fibrous sheath formation. The polypeptide is Interferon-inducible GTPase 5 (IRGC) (Bos taurus (Bovine)).